Consider the following 155-residue polypeptide: Glycosylation-dependent cell adhesion molecule 1 (155 aa).

Positions 1–18 (MKFFAVLLLASLAATSLA) are cleaved as a signal peptide. A glycan (O-linked (GalNAc...) threonine) is linked at Thr34. A phosphoserine mark is found at Ser48, Ser53, Ser57, Ser59, and Ser65. Residues 74 to 109 (ARRHQNQNPKLLHPVPQESSFRNTATQSEETKELTP) form a disordered region. Polar residues predominate over residues 90 to 101 (QESSFRNTATQS).

It belongs to the PP3/GlyCAM-1 family. In terms of tissue distribution, highly expressed in whey fraction of camel milk.

In Camelus dromedarius (Dromedary), this protein is Glycosylation-dependent cell adhesion molecule 1 (GLYCAM1).